Reading from the N-terminus, the 452-residue chain is Chromosomal replication initiator protein DnaA (452 aa).

A domain I, interacts with DnaA modulators region spans residues M1–T73. The domain II stretch occupies residues T73–G102. The tract at residues N103–A323 is domain III, AAA+ region. The ATP site is built by G147, G149, K150, and T151. The segment at Q324–K452 is domain IV, binds dsDNA.

Belongs to the DnaA family. In terms of assembly, oligomerizes as a right-handed, spiral filament on DNA at oriC.

Its subcellular location is the cytoplasm. Plays an essential role in the initiation and regulation of chromosomal replication. ATP-DnaA binds to the origin of replication (oriC) to initiate formation of the DNA replication initiation complex once per cell cycle. Binds the DnaA box (a 9 base pair repeat at the origin) and separates the double-stranded (ds)DNA. Forms a right-handed helical filament on oriC DNA; dsDNA binds to the exterior of the filament while single-stranded (ss)DNA is stabiized in the filament's interior. The ATP-DnaA-oriC complex binds and stabilizes one strand of the AT-rich DNA unwinding element (DUE), permitting loading of DNA polymerase. After initiation quickly degrades to an ADP-DnaA complex that is not apt for DNA replication. Binds acidic phospholipids. In Acholeplasma laidlawii (strain PG-8A), this protein is Chromosomal replication initiator protein DnaA.